The sequence spans 2388 residues: Spectrin beta chain, non-erythrocytic 2 (2388 aa).

Ser-2 is subject to N-acetylserine. The segment at 2-278 is actin-binding; the sequence is SSTLSPTDFD…IITYVATYYH (277 aa). Phosphoserine is present on residues Ser-6 and Ser-31. 2 consecutive Calponin-homology (CH) domains span residues 57–161 and 176–281; these read AVQK…LRFQ and KSAK…HYFS. Spectrin repeat units follow at residues 306–414, 427–527, 532–639, 642–744, 749–849, and 856–954; these read LVEK…LALR, AARF…RERL, ELQK…RLEE, RLWR…QRLA, LYQF…RALE, and TMLS…KAAL. Ser-959 carries the phosphoserine modification. Spectrin repeat units follow at residues 960 to 1063, 1066 to 1169, 1174 to 1266, 1279 to 1379, 1384 to 1485, 1489 to 1586, 1589 to 1692, 1696 to 1797, 1801 to 1904, 1910 to 2010, and 2017 to 2078; these read IQNY…SLGE, RLQD…GRLA, FQGF…NQEA, EQQH…ARSL, RAEL…RRLQ, EQHQ…RLEE, RAQQ…RLQE, LCQL…GQVL, YELQ…QLLL, FRFF…DWLQ, and VFGR…LTAL. At Ser-1073 the chain carries Phosphoserine. Ser-1574 carries the post-translational modification Phosphoserine. Basic and acidic residues predominate over residues 2080-2096; the sequence is ERENEQKRKREEEERRK. Disordered regions lie at residues 2080 to 2112 and 2124 to 2207; these read EREN…EGSL and DGTQ…HVAT. Positions 2124–2163 are enriched in polar residues; that stretch reads DGTQSKLPPSTQAPSINGVCTDTESSQPLLEQQRLEQSNV. Phosphoserine is present on residues Ser-2169 and Ser-2199. Residues 2218 to 2328 form the PH domain; the sequence is QEQMEGTLCR…WLRVVNAAIA (111 aa). The disordered stretch occupies residues 2333-2388; that stretch reads ASGEPEEPVVPSASRGLTRAMTMPPVSQPEGSIVLRSKDGREREREKRFSFFKKNK. Thr-2354 is modified (phosphothreonine). Ser-2359 bears the Phosphoserine mark. Positions 2368–2381 are enriched in basic and acidic residues; it reads RSKDGREREREKRF.

This sequence belongs to the spectrin family. As to expression, abundantly transcribed in the brain. Neurons are the predominant cell-type to express the gene. Found abundantly in Purkinje cells.

It is found in the cytoplasm. The protein localises to the cytoskeleton. It localises to the cell cortex. Probably plays an important role in neuronal membrane skeleton. The polypeptide is Spectrin beta chain, non-erythrocytic 2 (Sptbn2) (Rattus norvegicus (Rat)).